A 223-amino-acid chain; its full sequence is Gastrula zinc finger protein XlCGF52.1 (223 aa).

8 consecutive C2H2-type zinc fingers follow at residues 6-27, 33-55, 61-83, 89-111, 117-139, 145-167, 173-195, and 201-223; these read FTCPECGKRFSQKSNCWHTEDH, FTCMECSKSFTVKSSLLSHQRVH, YTCTQCNKQFSHSAQLRAHISTH, FPCTECSKTFSLKHKLYKHQRIH, FQCLECGKSFSVKHGLLKHQRSH, YACSECQKTFAHKTTLMVHERIH, YECNDCGKRFIHSTNLNCHQKIH, and FTCTECGKSFSLKNKLVRHQKIH.

The protein belongs to the krueppel C2H2-type zinc-finger protein family.

The protein localises to the nucleus. In terms of biological role, may be involved in transcriptional regulation. This is Gastrula zinc finger protein XlCGF52.1 from Xenopus laevis (African clawed frog).